An 810-amino-acid chain; its full sequence is Phospholipase D alpha 2 (810 aa).

One can recognise a C2 domain in the interval 1 to 126 (MEECLLHGRL…LHGEEVDRWV (126 aa)). Aspartate 187 contributes to the Ca(2+) binding site. In terms of domain architecture, PLD phosphodiesterase 1 spans 327–365 (TMFTHHQKIVVVDSEMPSGGSRSRRIVSFVGGLDLCDGR). Residues histidine 332, lysine 334, and aspartate 339 contribute to the active site. A 1,2-diacyl-sn-glycero-3-phosphate is bound at residue histidine 332. Ca(2+) contacts are provided by histidine 371 and histidine 405. Glutamine 521 and histidine 661 together coordinate a 1,2-diacyl-sn-glycero-3-phosphate. The PLD phosphodiesterase 2 domain maps to 656–683 (FMIYVHTKMMIVDDEYIIIGSANINQRS). Active-site residues include histidine 661, lysine 663, and aspartate 668. Glutamate 722 provides a ligand contact to Ca(2+).

Belongs to the phospholipase D family. C2-PLD subfamily. It depends on Ca(2+) as a cofactor. In terms of tissue distribution, highly expressed in roots, stems and flowers, moderately in leaves, seedlings and siliques. Not detected in dry seeds.

It localises to the cytoplasm. Its subcellular location is the membrane. It is found in the vacuole. The protein localises to the cytoplasmic vesicle. The protein resides in the clathrin-coated vesicle. The catalysed reaction is a 1,2-diacyl-sn-glycero-3-phosphocholine + H2O = a 1,2-diacyl-sn-glycero-3-phosphate + choline + H(+). In terms of biological role, hydrolyzes glycerol-phospholipids at the terminal phosphodiesteric bond to generate phosphatidic acids (PA). Plays an important role in various cellular processes, including phytohormone action and response to stress, characterized by acidification of the cell. The sequence is that of Phospholipase D alpha 2 from Arabidopsis thaliana (Mouse-ear cress).